A 278-amino-acid polypeptide reads, in one-letter code: HTH-type transcriptional activator RhaS (278 aa).

One can recognise an HTH araC/xylS-type domain in the interval Asn174–Gly272. 2 consecutive DNA-binding regions (H-T-H motif) follow at residues Glu191–Thr212 and Val239–Phe262.

Binds DNA as a dimer.

The protein localises to the cytoplasm. Its function is as follows. Activates expression of the rhaBAD and rhaT operons. The chain is HTH-type transcriptional activator RhaS from Salmonella enteritidis PT4 (strain P125109).